Consider the following 2541-residue polypeptide: Talin-1 (2541 aa).

Residues 86-403 enclose the FERM domain; the sequence is RPLKIRMLDG…GYIDIILKKK (318 aa). The residue at position 167 (Thr-167) is a Phosphothreonine. The interval 280-435 is interaction with LAYN; the sequence is FQAHKNCGQM…PKKSTVLQQQ (156 aa). A phosphoserine mark is found at Ser-405, Ser-425, Ser-446, Ser-620, and Ser-729. Positions 482–655 are helical bundle R1; sequence RGHMPPLTSA…QASGELLQQI (174 aa). The segment at 656–786 is helical bundle R2; sequence GESDTDPHFQ…ALNELLQHVK (131 aa). The segment at 787 to 911 is helical bundle R3; the sequence is AHATGAGPAG…NAAAQNAIKK (125 aa). The helical bundle R4 stretch occupies residues 913 to 1044; the sequence is LVQRLEHAAK…RTAAQKAQEA (132 aa). Ser-1021 bears the Phosphoserine mark. Residues 1046–1206 are helical bundle R5; the sequence is GPLEMDSALS…NRCVSCLPGQ (161 aa). At Tyr-1116 the chain carries Phosphotyrosine. Thr-1142 is modified (phosphothreonine). 2 positions are modified to phosphoserine: Ser-1201 and Ser-1225. The interval 1207–1357 is helical bundle R6; sequence RDVDNALRAV…QLITMCTQQA (151 aa). Thr-1263 carries the post-translational modification Phosphothreonine. Residue Ser-1323 is modified to Phosphoserine. The segment at 1327–1948 is interaction with SYNM; it reads AAPNLKSQLA…CSPSDAYTKK (622 aa). The helical bundle R7A stretch occupies residues 1358–1453; the sequence is PGQKECDNAL…AYLVGVSDPN (96 aa). Residues 1359 to 1659 form an interaction with VCL and F-actin region; it reads GQKECDNALR…SMRDKAPGQL (301 aa). The segment at 1461 to 1580 is helical bundle R8; it reads LVEPTQFARA…NLSAFASNPE (120 aa). Lys-1544 carries the post-translational modification N6-acetyllysine. The interval 1581–1653 is helical bundle R7B; that stretch reads FSSIPAQISP…IKKLITSMRD (73 aa). Residues 1655 to 1822 form a helical bundle R9 region; sequence APGQLECETA…TLNEAASAAG (168 aa). A helical bundle R10 region spans residues 1823–1973; it reads VVGGMVDSIT…VLAALQAGNR (151 aa). Ser-1849 carries the post-translational modification Phosphoserine. A Phosphothreonine modification is found at Thr-1855. Residue Ser-1878 is modified to Phosphoserine. A helical bundle R11 region spans residues 1974–2140; it reads GTQACITAAS…TVKAVEDEAT (167 aa). An N6-acetyllysine modification is found at Lys-2031. A Phosphoserine modification is found at Ser-2040. Lys-2115 carries the post-translational modification N6-acetyllysine. Residues 2141 to 2294 form a helical bundle R12 region; the sequence is KGTRALEATT…QAAEAMKGTE (154 aa). The region spanning 2293 to 2533 is the I/LWEQ domain; the sequence is TEWVDPEDPT…QIRQQQYKFL (241 aa). Residues 2300 to 2482 form a helical bundle R13 region; the sequence is DPTVIAENEL…AAQKAAAFEE (183 aa).

In terms of assembly, part of a complex composed of THSD1, PTK2/FAK1, TLN1 and VCL. Interacts with THSD1; this promotes interaction with PTK2/FAK1 and VCL. Binds with high affinity to VCL and with low affinity to integrins. Interacts with APBB1IP; this inhibits VCL binding. Interacts with PTK2/FAK1. Interacts with PIP5K1C and NRAP. Interacts with LAYN. Interacts with SYNM. Interacts with ITGB1; the interaction is prevented by competitive binding of ITGB1BP1. Interacts with SVEP1. Interacts (via R7 domain) with KANK1 or KANK2 (via KN motif); this interaction likely initiates the assembly of cortical microtubule stabilization complexes (CMSCs) at the vicinity of focal adhesions. As to quaternary structure, interacts with VCL; shows reduced VCL binding compared to isoform 2. Interacts with APBB1IP; shows similar level of binding compared to isoform 2. Interacts with VCL; shows enhanced VCL binding compared to isoform 1. Interacts with APBB1IP; shows similar level of binding compared to isoform 1. In terms of assembly, (Microbial infection) Interacts with human cytomegalovirus protein UL135. Expressed at low to non-detectable levels in many tissues but highly expressed in skin and pancreas with other tissues including kidney cortex, endocervix, testis, pituitary, liver, and spleen also showing robust expression.

It is found in the cell projection. It localises to the ruffle membrane. The protein localises to the cytoplasm. The protein resides in the cytoskeleton. Its subcellular location is the cell surface. It is found in the cell junction. It localises to the focal adhesion. High molecular weight cytoskeletal protein concentrated at regions of cell-matrix and cell-cell contacts. Involved in connections of major cytoskeletal structures to the plasma membrane. With KANK1 co-organize the assembly of cortical microtubule stabilizing complexes (CMSCs) positioned to control microtubule-actin crosstalk at focal adhesions (FAs) rims. This chain is Talin-1 (TLN1), found in Homo sapiens (Human).